Here is a 323-residue protein sequence, read N- to C-terminus: Glyoxylate/hydroxypyruvate reductase HPR3 (323 aa).

NADP(+) is bound by residues 160-163, 182-184, and 238-240; these read LGSI, SRS, and VGR. Catalysis depends on residues Arg-240 and Glu-269. Residue His-287 is the Proton donor of the active site. 287 to 289 is a binding site for NADP(+); it reads HFA.

Belongs to the D-isomer specific 2-hydroxyacid dehydrogenase family. GyaR subfamily. Homodimer.

It carries out the reaction glycolate + NADP(+) = glyoxylate + NADPH + H(+). It catalyses the reaction (R)-glycerate + NADP(+) = 3-hydroxypyruvate + NADPH + H(+). Its activity is regulated as follows. Inhibited by oxalate. Functionally, catalyzes the NADPH-dependent reduction of glyoxylate and hydroxypyruvate (HP) into glycolate and glycerate. Mostly active in the presence of NADPH and glyoxylate. This Arabidopsis thaliana (Mouse-ear cress) protein is Glyoxylate/hydroxypyruvate reductase HPR3 (HPR3).